A 257-amino-acid chain; its full sequence is 3-dehydroquinate dehydratase (257 aa).

3-dehydroquinate-binding positions include 50–52 and R86; that span reads EWR. Catalysis depends on H147, which acts as the Proton donor/acceptor. K174 (schiff-base intermediate with substrate) is an active-site residue. R216, S235, and Q239 together coordinate 3-dehydroquinate.

This sequence belongs to the type-I 3-dehydroquinase family. In terms of assembly, homodimer.

The enzyme catalyses 3-dehydroquinate = 3-dehydroshikimate + H2O. The protein operates within metabolic intermediate biosynthesis; chorismate biosynthesis; chorismate from D-erythrose 4-phosphate and phosphoenolpyruvate: step 3/7. Functionally, involved in the third step of the chorismate pathway, which leads to the biosynthesis of aromatic amino acids. Catalyzes the cis-dehydration of 3-dehydroquinate (DHQ) and introduces the first double bond of the aromatic ring to yield 3-dehydroshikimate. This is 3-dehydroquinate dehydratase from Geobacillus kaustophilus (strain HTA426).